The chain runs to 176 residues: NAD(P)H-quinone oxidoreductase subunit 6, chloroplastic (176 aa).

A run of 5 helical transmembrane segments spans residues 10–30, 32–52, 61–81, 92–112, and 152–172; these read ILLV…ILLT, TIYS…FYIL, AQLL…VMFM, IWTV…FSLI, and FILP…GAIA.

The protein belongs to the complex I subunit 6 family. NDH is composed of at least 16 different subunits, 5 of which are encoded in the nucleus.

Its subcellular location is the plastid. It localises to the chloroplast thylakoid membrane. It catalyses the reaction a plastoquinone + NADH + (n+1) H(+)(in) = a plastoquinol + NAD(+) + n H(+)(out). The enzyme catalyses a plastoquinone + NADPH + (n+1) H(+)(in) = a plastoquinol + NADP(+) + n H(+)(out). In terms of biological role, NDH shuttles electrons from NAD(P)H:plastoquinone, via FMN and iron-sulfur (Fe-S) centers, to quinones in the photosynthetic chain and possibly in a chloroplast respiratory chain. The immediate electron acceptor for the enzyme in this species is believed to be plastoquinone. Couples the redox reaction to proton translocation, and thus conserves the redox energy in a proton gradient. The sequence is that of NAD(P)H-quinone oxidoreductase subunit 6, chloroplastic (ndhG) from Piper cenocladum (Ant piper).